Consider the following 479-residue polypeptide: Chromosomal replication initiator protein DnaA (479 aa).

A domain I, interacts with DnaA modulators region spans residues M1 to Y71. A domain II region spans residues Y71–G138. Residues T86–R99 show a composition bias toward polar residues. Residues T86–P106 form a disordered region. Residues M139–A355 are domain III, AAA+ region. Positions 183, 185, 186, and 187 each coordinate ATP. A domain IV, binds dsDNA region spans residues E356 to G479.

The protein belongs to the DnaA family. As to quaternary structure, oligomerizes as a right-handed, spiral filament on DNA at oriC.

The protein localises to the cytoplasm. Its function is as follows. Plays an essential role in the initiation and regulation of chromosomal replication. ATP-DnaA binds to the origin of replication (oriC) to initiate formation of the DNA replication initiation complex once per cell cycle. Binds the DnaA box (a 9 base pair repeat at the origin) and separates the double-stranded (ds)DNA. Forms a right-handed helical filament on oriC DNA; dsDNA binds to the exterior of the filament while single-stranded (ss)DNA is stabiized in the filament's interior. The ATP-DnaA-oriC complex binds and stabilizes one strand of the AT-rich DNA unwinding element (DUE), permitting loading of DNA polymerase. After initiation quickly degrades to an ADP-DnaA complex that is not apt for DNA replication. Binds acidic phospholipids. The sequence is that of Chromosomal replication initiator protein DnaA from Chloroflexus aurantiacus (strain ATCC 29366 / DSM 635 / J-10-fl).